Consider the following 501-residue polypeptide: Glycerol kinase (501 aa).

Residue Thr-11 participates in ADP binding. Residues Thr-11, Thr-12, and Ser-13 each contribute to the ATP site. Thr-11 lines the sn-glycerol 3-phosphate pocket. Residue Arg-15 coordinates ADP. Residues Arg-81, Glu-82, Tyr-133, and Asp-242 each contribute to the sn-glycerol 3-phosphate site. Glycerol-binding residues include Arg-81, Glu-82, Tyr-133, Asp-242, and Gln-243. Residues Thr-264 and Gly-307 each coordinate ADP. Residues Thr-264, Gly-307, Gln-311, and Gly-409 each coordinate ATP. Residues Gly-409 and Asn-413 each contribute to the ADP site.

It belongs to the FGGY kinase family.

It catalyses the reaction glycerol + ATP = sn-glycerol 3-phosphate + ADP + H(+). Its pathway is polyol metabolism; glycerol degradation via glycerol kinase pathway; sn-glycerol 3-phosphate from glycerol: step 1/1. Its activity is regulated as follows. Inhibited by fructose 1,6-bisphosphate (FBP). In terms of biological role, key enzyme in the regulation of glycerol uptake and metabolism. Catalyzes the phosphorylation of glycerol to yield sn-glycerol 3-phosphate. In Borrelia garinii subsp. bavariensis (strain ATCC BAA-2496 / DSM 23469 / PBi) (Borreliella bavariensis), this protein is Glycerol kinase.